Reading from the N-terminus, the 308-residue chain is Glutaminase (308 aa).

Substrate-binding residues include serine 66, asparagine 117, glutamate 161, asparagine 168, tyrosine 192, tyrosine 244, and valine 262.

This sequence belongs to the glutaminase family. In terms of assembly, homotetramer.

It carries out the reaction L-glutamine + H2O = L-glutamate + NH4(+). The sequence is that of Glutaminase from Klebsiella pneumoniae subsp. pneumoniae (strain ATCC 700721 / MGH 78578).